We begin with the raw amino-acid sequence, 240 residues long: uncharacterized protein (240 aa).

The protein localises to the mitochondrion. This is an uncharacterized protein from Arabidopsis thaliana (Mouse-ear cress).